The chain runs to 105 residues: Small ribosomal subunit protein uS10 (105 aa).

It belongs to the universal ribosomal protein uS10 family. Part of the 30S ribosomal subunit.

Functionally, involved in the binding of tRNA to the ribosomes. The sequence is that of Small ribosomal subunit protein uS10 from Roseobacter denitrificans (strain ATCC 33942 / OCh 114) (Erythrobacter sp. (strain OCh 114)).